The following is a 161-amino-acid chain: UPF0178 protein PXO_00400 (161 aa).

Belongs to the UPF0178 family.

This chain is UPF0178 protein PXO_00400, found in Xanthomonas oryzae pv. oryzae (strain PXO99A).